The sequence spans 323 residues: Methionyl-tRNA formyltransferase (323 aa).

Residue S118–P121 coordinates (6S)-5,6,7,8-tetrahydrofolate.

It belongs to the Fmt family.

The catalysed reaction is L-methionyl-tRNA(fMet) + (6R)-10-formyltetrahydrofolate = N-formyl-L-methionyl-tRNA(fMet) + (6S)-5,6,7,8-tetrahydrofolate + H(+). In terms of biological role, attaches a formyl group to the free amino group of methionyl-tRNA(fMet). The formyl group appears to play a dual role in the initiator identity of N-formylmethionyl-tRNA by promoting its recognition by IF2 and preventing the misappropriation of this tRNA by the elongation apparatus. The chain is Methionyl-tRNA formyltransferase from Buchnera aphidicola subsp. Baizongia pistaciae (strain Bp).